We begin with the raw amino-acid sequence, 622 residues long: Signal recognition particle subunit SRP68 (622 aa).

The interval 576-622 (RDATPKKAAKGSSAAAASSKTSNQEEEEQQGLTGMLSGWKKSFWGNK) is disordered. Residues 585–595 (KGSSAAAASSK) are compositionally biased toward low complexity.

Belongs to the SRP68 family. Heterodimer with srpa-72. Srpa-68/srpa-72 heterodimer formation is stabilized by the presence of 7SL RNA. Component of a signal recognition particle (SRP) complex that consists of a 7SL RNA molecule of 300 nucleotides and six protein subunits: srpa-72, srpa-68, SRP54, F37F2.2/SRP19, F25G6.8/SRP14 and ZK512.4/SRP9. Within the SRP complex, interacts (via C-terminus) with srpa-72 (via N-terminus).

It is found in the cytoplasm. Its subcellular location is the nucleus. The protein localises to the nucleolus. It localises to the endoplasmic reticulum. In terms of biological role, component of the signal recognition particle (SRP) complex, a ribonucleoprotein complex that mediates the cotranslational targeting of secretory and membrane proteins to the endoplasmic reticulum (ER). The SRP complex interacts with the signal sequence in nascent secretory and membrane proteins and directs them to the membrane of the ER. The SRP complex targets the ribosome-nascent chain complex to the SRP receptor (SR), which is anchored in the ER, where SR compaction and GTPase rearrangement drive cotranslational protein translocation into the ER. Binds the signal recognition particle RNA (7SL RNA), srpa-72 binds to this complex subsequently. The SRP complex possibly participates in the elongation arrest function. The sequence is that of Signal recognition particle subunit SRP68 from Caenorhabditis elegans.